We begin with the raw amino-acid sequence, 65 residues long: Muscarinic toxin 3 (65 aa).

Cystine bridges form between C3–C24, C17–C42, C46–C57, and C58–C63.

The protein belongs to the three-finger toxin family. Short-chain subfamily. Aminergic toxin sub-subfamily. As to expression, expressed by the venom gland.

Its subcellular location is the secreted. Potent antagonist (IC(50)=1-10 nM) of M4 (CHRM4) muscarinic receptors, and CHRM1, ADRA1A, ADRA2A and ADRA2C adrenergic receptors. Also antagonises ADRA1B and ADRA1D adrenergic receptors with a 10-times lower affinity. This chain is Muscarinic toxin 3, found in Dendroaspis angusticeps (Eastern green mamba).